A 416-amino-acid polypeptide reads, in one-letter code: Serine--tRNA ligase (416 aa).

232–234 (TAE) lines the L-serine pocket. 263-265 (RKE) serves as a coordination point for ATP. Position 286 (E286) interacts with L-serine. 350–353 (EISS) contacts ATP. S384 serves as a coordination point for L-serine.

The protein belongs to the class-II aminoacyl-tRNA synthetase family. Type-1 seryl-tRNA synthetase subfamily. In terms of assembly, homodimer. The tRNA molecule binds across the dimer.

Its subcellular location is the cytoplasm. It carries out the reaction tRNA(Ser) + L-serine + ATP = L-seryl-tRNA(Ser) + AMP + diphosphate + H(+). The catalysed reaction is tRNA(Sec) + L-serine + ATP = L-seryl-tRNA(Sec) + AMP + diphosphate + H(+). The protein operates within aminoacyl-tRNA biosynthesis; selenocysteinyl-tRNA(Sec) biosynthesis; L-seryl-tRNA(Sec) from L-serine and tRNA(Sec): step 1/1. Catalyzes the attachment of serine to tRNA(Ser). Is also able to aminoacylate tRNA(Sec) with serine, to form the misacylated tRNA L-seryl-tRNA(Sec), which will be further converted into selenocysteinyl-tRNA(Sec). This chain is Serine--tRNA ligase, found in Nautilia profundicola (strain ATCC BAA-1463 / DSM 18972 / AmH).